Reading from the N-terminus, the 40-residue chain is Protamine-2 (40 aa).

Residues 1-40 (MPPRRKRVSSAPRRRRRTYRRTTAHKHQERPVHRRRRRRH) are disordered.

As to expression, testis.

Its subcellular location is the nucleus. It is found in the chromosome. Functionally, protamines substitute for histones in the chromatin of sperm during the haploid phase of spermatogenesis. They compact sperm DNA into a highly condensed, stable and inactive complex. The polypeptide is Protamine-2 (PBP2) (Bufo japonicus (Japanese common toad)).